Consider the following 201-residue polypeptide: Phosphoprotein (201 aa).

The tract at residues 1–70 is disordered; that stretch reads MATRPSSLVD…DQRTGREQLS (70 aa). 2 consecutive short sequence motifs (nuclear localization signal) follow at residues 29–36 and 181–193; these read PRPRKIPR and PPRI…SAPT.

As to quaternary structure, homomultimer; only active in its oligomeric state. Interacts with nucleoprotein/N. Interacts with matrix/M protein. Interacts with host TBK1. Interacts with polymerase L. Interacts with host HMGB1; this interaction is required to stabilize RNP on chromosomes. Post-translationally, phosphorylated by host PKC epsilon and casein kinase II.

It is found in the host nucleus. Its subcellular location is the host cytoplasm. Its function is as follows. Essential component of the RNA polymerase transcription and replication complex. Acts as a scaffold which brings L in close proximity to the N-RNA complex. Plays a role in the segregation of the viral genome in host daughter cells during mitosis by interacting with host HMGB1, a host chromatin-remodeling DNA architectural protein, thereby stabilizing RNP on chromosomes. Interacts with host TBK1 and thus interferes with activation of cellular antiviral state. Inhibits cellular histone acetyltransferase activities. This is Phosphoprotein (P/X) from Bos taurus (Bovine).